The following is a 172-amino-acid chain: Monopolar attachment protein 1 (172 aa).

Over residues 15–30 (KKNKNPKISNSKKKNS) the composition is skewed to basic residues. The disordered stretch occupies residues 15–43 (KKNKNPKISNSKKKNSTRPALQDKTNQTL). Over residues 31–43 (TRPALQDKTNQTL) the composition is skewed to polar residues. The POLO box domain (PBD)-binding signature appears at 100–102 (STP).

In terms of assembly, interacts with rec8, Interacts with plo1.

It is found in the nucleus. The protein resides in the chromosome. Its subcellular location is the centromere. It localises to the kinetochore. Functionally, plays an important role in chromosome segregation during meiosis I by allowing meiotic rec8 to establish cohesion at the centromeric central core and thereby promote the side-by-side structure of kinetochores at meiosis I. Enables monopolar attachment during meiosis I. Required to facilitate kinetochore mono-orientation during meiosis I, when kinetochores on sister chromosomes face the same direction and are thus captured and pulled by spindle fibers from the same pole. Acts in collaboration with plo1. The sequence is that of Monopolar attachment protein 1 (moa1) from Schizosaccharomyces pombe (strain 972 / ATCC 24843) (Fission yeast).